We begin with the raw amino-acid sequence, 1048 residues long: Platelet-derived growth factor receptor beta (1048 aa).

The signal sequence occupies residues 1 to 30; sequence MLRASAMRAAVLHLTVALAALLSSCTTVSC. Over 31 to 528 the chain is Extracellular; that stretch reads LKIVPEEKQL…LVSSSLFSQV (498 aa). In terms of domain architecture, Ig-like C2-type 1 spans 35-124; the sequence is PEEKQLILAE…EIKEVAVFVP (90 aa). Disulfide bonds link cysteine 52-cysteine 108 and cysteine 153-cysteine 194. 4 N-linked (GlcNAc...) asparagine glycosylation sites follow: asparagine 87, asparagine 159, asparagine 224, and asparagine 239. 2 Ig-like C2-type domains span residues 216-309 and 319-406; these read PEDI…ASVN and AVKS…KEVT. Cysteine 240 and cysteine 293 are disulfide-bonded. N-linked (GlcNAc...) asparagine glycans are attached at residues asparagine 309, asparagine 327, and asparagine 457. Cysteine 434 and cysteine 503 are oxidised to a cystine. The chain crosses the membrane as a helical span at residues 529–549; it reads VLLAVVLTLVPIIIMSIIILI. At 550-1048 the chain is on the cytoplasmic side; sequence AVWKKKPRYE…PIPDPKPEKS (499 aa). Phosphotyrosine; by autocatalysis is present on residues tyrosine 558, tyrosine 575, and tyrosine 577. In terms of domain architecture, Protein kinase spans 596–957; the sequence is LVLGRTLGSG…FLVHCVGDML (362 aa). Residues 602–610 and lysine 630 contribute to the ATP site; that span reads LGSGAFGRV. Tyrosine 735, tyrosine 746, tyrosine 758, tyrosine 766, and tyrosine 770 each carry phosphotyrosine; by autocatalysis. Catalysis depends on aspartate 821, which acts as the Proton acceptor. Phosphotyrosine; by autocatalysis occurs at positions 852 and 1036.

It belongs to the protein kinase superfamily. Tyr protein kinase family. CSF-1/PDGF receptor subfamily. In terms of assembly, interacts with homodimeric PDGFB and PDGFD, and with heterodimers formed by PDGFA and PDGFB. Monomer in the absence of bound ligand. Interaction with homodimeric PDGFB, heterodimers formed by PDGFA and PDGFB or homodimeric PDGFD, leads to receptor dimerization, where both PDGFRA homodimers and heterodimers with PDGFRB are observed. Post-translationally, ubiquitinated. After autophosphorylation, the receptor is polyubiquitinated, leading to its degradation. In terms of processing, autophosphorylated on tyrosine residues upon ligand binding. Autophosphorylation occurs in trans, i.e. one subunit of the dimeric receptor phosphorylates tyrosine residues on the other subunit.

It is found in the cell membrane. The protein resides in the cytoplasmic vesicle. Its subcellular location is the lysosome lumen. It catalyses the reaction L-tyrosyl-[protein] + ATP = O-phospho-L-tyrosyl-[protein] + ADP + H(+). Its activity is regulated as follows. Present in an inactive conformation in the absence of bound ligand. Binding of PDGFB and/or PDGFD leads to dimerization and activation by autophosphorylation on tyrosine residues. Its function is as follows. Tyrosine-protein kinase that acts as a cell-surface receptor for homodimeric PDGFB and PDGFD and for heterodimers formed by PDGFA and PDGFB, and plays an essential role in the regulation of embryonic development, cell proliferation, survival, differentiation, chemotaxis and migration. Plays an essential role in blood vessel development by promoting proliferation, migration and recruitment of pericytes and smooth muscle cells to endothelial cells. Required for normal development of the cardiovascular system. Required for normal recruitment of pericytes (mesangial cells) in the kidney glomerulus, and for normal formation of a branched network of capillaries in kidney glomeruli. Promotes rearrangement of the actin cytoskeleton and the formation of membrane ruffles. Binding of its cognate ligands - homodimeric PDGFB, heterodimers formed by PDGFA and PDGFB or homodimeric PDGFD -leads to the activation of several signaling cascades; the response depends on the nature of the bound ligand and is modulated by the formation of heterodimers between PDGFRA and PDGFRB. Receptor signaling is down-regulated by protein phosphatases that dephosphorylate the receptor and its down-stream effectors, and by rapid internalization of the activated receptor. The protein is Platelet-derived growth factor receptor beta (pdgfrb) of Takifugu rubripes (Japanese pufferfish).